A 175-amino-acid polypeptide reads, in one-letter code: MSFVIAAPEAIAAAATDLASIGSTIGAANAAAAANTTAVLAAGADQVSVAIAAAFGAHGQAYQALSAQAATFHIQFVQALTAGAGSYAAAEAASAASITSPLLDAINAPFLAALGRPLIGNGADGAPGTGAAGGAGGLLFGNGGAGGSGAPGGAGGLLFGNGGAGGPGASGGALG.

Residues 1-93 (MSFVIAAPEA…AGSYAAAEAA (93 aa)) enclose the PE domain.

The protein belongs to the mycobacterial PE family. PGRS subfamily.

Its subcellular location is the secreted. It is found in the cell wall. It localises to the cell surface. In Mycobacterium tuberculosis (strain ATCC 25618 / H37Rv), this protein is PE-PGRS family protein PE_PGRS8.